Here is a 101-residue protein sequence, read N- to C-terminus: Putative pterin-4-alpha-carbinolamine dehydratase (101 aa).

Belongs to the pterin-4-alpha-carbinolamine dehydratase family.

The enzyme catalyses (4aS,6R)-4a-hydroxy-L-erythro-5,6,7,8-tetrahydrobiopterin = (6R)-L-erythro-6,7-dihydrobiopterin + H2O. In Rhizobium rhizogenes (strain K84 / ATCC BAA-868) (Agrobacterium radiobacter), this protein is Putative pterin-4-alpha-carbinolamine dehydratase.